We begin with the raw amino-acid sequence, 505 residues long: Prenylcysteine oxidase 1 (505 aa).

The first 28 residues, 1 to 28 (MGRFAAALVGSLFWLGLLLCGLGSLASA), serve as a signal peptide directing secretion. N-linked (GlcNAc...) asparagine glycosylation is found at asparagine 196, asparagine 323, and asparagine 353.

This sequence belongs to the prenylcysteine oxidase family. FAD serves as cofactor. Highly expressed in the liver, kidney, heart and brain.

It is found in the lysosome. The enzyme catalyses an S-polyprenyl-L-cysteine + O2 + H2O = a polyprenal + L-cysteine + H2O2. The catalysed reaction is S-(2E,6E)-farnesyl-L-cysteine + O2 + H2O = (2E,6E)-farnesal + L-cysteine + H2O2. It catalyses the reaction [(2E,6E,10E)-geranylgeranyl]-L-cysteine + O2 + H2O = (2E,6E,10E)-geranylgeranial + L-cysteine + H2O2. Functionally, prenylcysteine oxidase that cleaves the thioether bond of prenyl-L-cysteines, such as farnesylcysteine and geranylgeranylcysteine. Only active against free prenylcysteines and not prenylcysteine residues within prenylated proteins or peptides. Involved in the final step in the degradation of prenylated proteins, by degrading prenylcysteines after the protein has been degraded. The protein is Prenylcysteine oxidase 1 of Mus musculus (Mouse).